We begin with the raw amino-acid sequence, 402 residues long: MQPALNAFTEQPADTAEATSRAGLEQAFALFNQMSSQLSESYSLLEERVTELKGQLALVSAQRMEELAEKERLANRLQSLLDLLPGGVIVIDAHGVVREANPAALGLLGEPLVGMLWREVIARCFAPREDDGHEISLRDGRRLSIATRSLNGEPGQLILLNDLTDTRRLQEQLARHERLSALGRMVASLAHQIRTPLSAALLYAGHLSEQALPTDQQQRFAGRLKERLHELEHQVRDMLVFARGELPLTDRVAPKALFDSLRAAAEVHVQGLQVRWQCEARGGELLCNRDTLVGTVLNLVENAIQACGPELRLKVHLYARADSLRLSVSDNGPGMDPATLARLGEPFFTTKTTGTGLGLAVVKAVARAHQGQLQLRSRPGRGTCATLILPLIPAAPLSAIQE.

The 206-residue stretch at 188-393 (SLAHQIRTPL…CATLILPLIP (206 aa)) folds into the Histidine kinase domain. Position 191 is a phosphohistidine; by autocatalysis (His191).

The enzyme catalyses ATP + protein L-histidine = ADP + protein N-phospho-L-histidine.. Member of the two-component regulatory system FleS/FleR that regulates the expression of multiple genes involved in flagellar synthesis, adhesion, swarming, motility and antibiotic resistance. May function as a membrane-associated protein kinase that phosphorylates FleR in response to environmental signals leading to activation of specific gene promoters. This chain is Sensor protein kinase FleS (fleS), found in Pseudomonas aeruginosa (strain ATCC 15692 / DSM 22644 / CIP 104116 / JCM 14847 / LMG 12228 / 1C / PRS 101 / PAO1).